The primary structure comprises 257 residues: K88 minor fimbrial subunit FaeJ (257 aa).

An N-terminal signal peptide occupies residues M1 to A26.

It localises to the fimbrium. In terms of biological role, K88 minor fimbrial subunit, plays an essential role in the biogenesis of the K88 fimbriae. Fimbriae (also called pili), are polar filaments radiating from the surface of the bacterium to a length of 0.5-1.5 micrometers and numbering 100-300 per cell. They enable bacteria to colonize the epithelium of specific host organs. The polypeptide is K88 minor fimbrial subunit FaeJ (faeJ) (Escherichia coli).